The primary structure comprises 603 residues: uncharacterized protein (603 aa).

Residues 257–281 (AGEAASSDHDQKISRVTRKRPREPK) are disordered.

This is an uncharacterized protein from Saccharomyces cerevisiae (strain ATCC 204508 / S288c) (Baker's yeast).